The primary structure comprises 584 residues: Peroxynitrite isomerase THAP4 (584 aa).

The segment at 1 to 85 adopts a THAP-type zinc-finger fold; it reads MVICCAAANC…LKPTAVPSIF (85 aa). The tract at residues 84–330 is disordered; sequence IFHLAEKKRR…EAVQSEHSDA (247 aa). The span at 89-104 shows a compositional bias: basic residues; that stretch reads EKKRRAGGHGRPRRRD. Residues 122–138 are compositionally biased toward low complexity; sequence GKAAAGSPSSSSASPMA. Basic and acidic residues predominate over residues 158–178; it reads AARETAGQERGRQPLEGRAED. A compositionally biased stretch (low complexity) spans 190–208; it reads GEAGTGAEDAGEEGATPAD. Residues 236 to 239 carry the HCFC1-binding motif (HBM) motif; that stretch reads LHSY. A Phosphoserine modification is found at serine 240. The span at 248 to 267 shows a compositional bias: basic and acidic residues; sequence ERPAVPREPVERKRLRRDAE. Positions 422 to 584 are nitrobindin; it reads PPKMSPVVEP…LHVTYKKVTP (163 aa). 2 residues coordinate heme b: threonine 451 and histidine 574.

This sequence in the C-terminal section; belongs to the nitrobindin family. Homodimer. Heme b serves as cofactor.

The protein localises to the cytoplasm. It localises to the nucleus. It carries out the reaction peroxynitrite = nitrate. Its pathway is nitrogen metabolism. Its function is as follows. Heme-binding protein able to scavenge peroxynitrite and to protect free L-tyrosine against peroxynitrite-mediated nitration, by acting as a peroxynitrite isomerase that converts peroxynitrite to nitrate. Therefore, this protein likely plays a role in peroxynitrite sensing and in the detoxification of reactive nitrogen and oxygen species (RNS and ROS, respectively). Is able to bind nitric oxide (NO) in vitro, but may act as a sensor of peroxynitrite levels in vivo, possibly modulating the transcriptional activity residing in the N-terminal region. This is Peroxynitrite isomerase THAP4 from Bos taurus (Bovine).